The chain runs to 148 residues: Outer envelope pore protein 16-1, chloroplastic (148 aa).

Residues 2 to 73 (PSSTFSGTVS…EHALKKLCKE (72 aa)) are contains 4 beta strands. The next 3 helical transmembrane spans lie at 75-91 (VYWGAAGGVYIGTEYGI), 102-118 (NAMLAGAATGAVLSAVG), and 125-142 (IVIDAILGGALATASQFV).

It belongs to the Tim17/Tim22/Tim23 family. Plastid outer envelope porin OEP16 (TC 1.B.30) subfamily. As to quaternary structure, homodimer and oligomers in membrane. Forms large complexes including TOC33, pPORA and OEP161 during pPORA import into plastids at the plastid envelope membrane. As to expression, expressed predominantly in leaves and cotyledons.

It localises to the plastid. Its subcellular location is the chloroplast outer membrane. It is found in the etioplast membrane. Stimulated by GTP. Functionally, voltage-dependent high-conductance channel with a slight cation-selectivity; selective for amino acids but excludes triosephosphates or uncharged sugars. Non-essential amino acid-selective channel protein and translocation pore for NADPH:protochlorophyllide oxidoreductase A (PORA) and possibly PORB. Involved in PORA precursor (pPORA) import and thus confers photoprotection onto etiolated seedlings during greening. The protein is Outer envelope pore protein 16-1, chloroplastic (OEP161) of Arabidopsis thaliana (Mouse-ear cress).